The following is a 381-amino-acid chain: Cytochrome b (381 aa).

Helical transmembrane passes span 34-54 (FGSL…FLAM), 78-99 (WLIR…YLHI), 114-134 (WNIG…GYVL), and 179-199 (FFAF…IHLL). Positions 84 and 98 each coordinate heme b. The heme b site is built by His-183 and His-197. Residue His-202 coordinates a ubiquinone. The next 4 membrane-spanning stretches (helical) occupy residues 227 to 247 (YKDI…TLFI), 289 to 309 (LGGV…PLLQ), 321 to 341 (MTQI…WIGG), and 348 to 368 (FIMV…IIIP).

The protein belongs to the cytochrome b family. In terms of assembly, the cytochrome bc1 complex contains 3 respiratory subunits (MT-CYB, CYC1 and UQCRFS1), 2 core proteins (UQCRC1 and UQCRC2) and probably 6 low-molecular weight proteins. Heme b is required as a cofactor.

The protein resides in the mitochondrion inner membrane. Its function is as follows. Component of the ubiquinol-cytochrome c reductase complex (complex III or cytochrome b-c1 complex) that is part of the mitochondrial respiratory chain. The b-c1 complex mediates electron transfer from ubiquinol to cytochrome c. Contributes to the generation of a proton gradient across the mitochondrial membrane that is then used for ATP synthesis. This chain is Cytochrome b (mt-cyb), found in Galeocerdo cuvier (Tiger shark).